The chain runs to 320 residues: uncharacterized protein (320 aa).

An N-terminal signal peptide occupies residues 1-23 (MKLNLRFPSYFLPVVAASAFLVS). C24 is lipidated: N-palmitoyl cysteine. C24 carries the S-diacylglycerol cysteine lipid modification. Residues 160 to 181 (KNHEHGHTHKNGETHEHDHDHH) are disordered.

The protein resides in the cell membrane. This is an uncharacterized protein from Mycoplasma pneumoniae (strain ATCC 29342 / M129 / Subtype 1) (Mycoplasmoides pneumoniae).